Consider the following 325-residue polypeptide: Holliday junction branch migration complex subunit RuvB (325 aa).

Residues 1–180 (MKNQLLDAKV…FGIHLKLNFY (180 aa)) are large ATPase domain (RuvB-L). ATP-binding positions include leucine 19, arginine 20, glycine 61, lysine 64, threonine 65, threonine 66, 127–129 (EDF), arginine 170, tyrosine 180, and arginine 217. Residue threonine 65 participates in Mg(2+) binding. A small ATPAse domain (RuvB-S) region spans residues 181-251 (SCEELTKIVE…ITDYALNQLG (71 aa)). Positions 254–325 (KLGLDSSDHK…ITANALKHLH (72 aa)) are head domain (RuvB-H). 3 residues coordinate DNA: arginine 290, arginine 309, and arginine 314.

This sequence belongs to the RuvB family. Homohexamer. Forms an RuvA(8)-RuvB(12)-Holliday junction (HJ) complex. HJ DNA is sandwiched between 2 RuvA tetramers; dsDNA enters through RuvA and exits via RuvB. An RuvB hexamer assembles on each DNA strand where it exits the tetramer. Each RuvB hexamer is contacted by two RuvA subunits (via domain III) on 2 adjacent RuvB subunits; this complex drives branch migration. In the full resolvosome a probable DNA-RuvA(4)-RuvB(12)-RuvC(2) complex forms which resolves the HJ.

It is found in the cytoplasm. The catalysed reaction is ATP + H2O = ADP + phosphate + H(+). Its function is as follows. The RuvA-RuvB-RuvC complex processes Holliday junction (HJ) DNA during genetic recombination and DNA repair, while the RuvA-RuvB complex plays an important role in the rescue of blocked DNA replication forks via replication fork reversal (RFR). RuvA specifically binds to HJ cruciform DNA, conferring on it an open structure. The RuvB hexamer acts as an ATP-dependent pump, pulling dsDNA into and through the RuvAB complex. RuvB forms 2 homohexamers on either side of HJ DNA bound by 1 or 2 RuvA tetramers; 4 subunits per hexamer contact DNA at a time. Coordinated motions by a converter formed by DNA-disengaged RuvB subunits stimulates ATP hydrolysis and nucleotide exchange. Immobilization of the converter enables RuvB to convert the ATP-contained energy into a lever motion, pulling 2 nucleotides of DNA out of the RuvA tetramer per ATP hydrolyzed, thus driving DNA branch migration. The RuvB motors rotate together with the DNA substrate, which together with the progressing nucleotide cycle form the mechanistic basis for DNA recombination by continuous HJ branch migration. Branch migration allows RuvC to scan DNA until it finds its consensus sequence, where it cleaves and resolves cruciform DNA. The chain is Holliday junction branch migration complex subunit RuvB from Orientia tsutsugamushi (strain Ikeda) (Rickettsia tsutsugamushi).